Here is a 580-residue protein sequence, read N- to C-terminus: Acyl-coenzyme A synthetase ACSM4, mitochondrial (580 aa).

The N-terminal 22 residues, 1–22, are a transit peptide targeting the mitochondrion; sequence MKVLLRCQRLRFIWLAKPAGRH. ATP-binding positions include 229–237, 368–373, D455, R470, and K566; these read TSGTTGSPK and EGYGQT.

The protein belongs to the ATP-dependent AMP-binding enzyme family. Mg(2+) is required as a cofactor. Mn(2+) serves as cofactor. As to expression, detected in adult olfactory epithelium.

It is found in the mitochondrion. It carries out the reaction a medium-chain fatty acid + ATP + CoA = a medium-chain fatty acyl-CoA + AMP + diphosphate. The catalysed reaction is hexanoate + ATP + CoA = hexanoyl-CoA + AMP + diphosphate. The enzyme catalyses octanoate + ATP + CoA = octanoyl-CoA + AMP + diphosphate. It catalyses the reaction decanoate + ATP + CoA = decanoyl-CoA + AMP + diphosphate. It carries out the reaction dodecanoate + ATP + CoA = dodecanoyl-CoA + AMP + diphosphate. Functionally, catalyzes the activation of fatty acids by CoA to produce an acyl-CoA, the first step in fatty acid metabolism. Capable of activating medium-chain fatty acids with a preference for C6-12 fatty acids. The sequence is that of Acyl-coenzyme A synthetase ACSM4, mitochondrial (Acsm4) from Rattus norvegicus (Rat).